A 90-amino-acid polypeptide reads, in one-letter code: Small ribosomal subunit protein bS20 (90 aa).

Over residues 1–10 (MANHKSTQKS) the composition is skewed to polar residues. A disordered region spans residues 1–25 (MANHKSTQKSIRQDQKRNLINKSRK).

It belongs to the bacterial ribosomal protein bS20 family.

Its function is as follows. Binds directly to 16S ribosomal RNA. The polypeptide is Small ribosomal subunit protein bS20 (Orientia tsutsugamushi (strain Boryong) (Rickettsia tsutsugamushi)).